The sequence spans 444 residues: Cop9 signalosome complex subunit 11 (444 aa).

One can recognise a PCI domain in the interval 195–367 (FFTMMTSEPL…IHFEDSSILQ (173 aa)). A disordered region spans residues 419 to 439 (SSDDMDIDEVNDRSDISDSEG).

As to quaternary structure, component of a COP9 signalosome-like (CSN) complex, composed of RRI1/CSN5, CSN9, RRI2/CSN10, PCI8/CSN11, CSN12 and CSI1. Interacts with PRT1 and RPG1, 2 subunits of the core complex of translation initiation factor 3 (eIF3).

It localises to the cytoplasm. Its subcellular location is the nucleus. Functionally, component of the COP9 signalosome (CSN) complex that acts as an regulator of the ubiquitin (Ubl) conjugation pathway by mediating the deneddylation of the cullin subunit of SCF-type E3 ubiquitin-protein ligase complexes The CSN complex is involved in the regulation of the mating pheromone response. PCI8 may also be involved in transcriptional and translational control. This chain is Cop9 signalosome complex subunit 11 (PCI8), found in Saccharomyces cerevisiae (strain ATCC 204508 / S288c) (Baker's yeast).